Consider the following 581-residue polypeptide: MTETHHAPLPDVYPSSKQPTSSTYSKCKKFGLPLIGLLTLLLAYISSFTKPVPNSTFDVPASPQCKKPQVYRPSFNKSVNLILNDKQFKIDSIRKLSGAIQIPTEISDTNPLPNDDPEYYSEFFKLHKYFEETFPLVHSHLKVEKVNQLGLLYTWEGTDPSLKPILFMAHQDVVPVNREIWDSWQYPPLSGHYDQETDYVWGRGSNDCKNLMLAELEGIEQLLADGYQTERTVILSLGFDEESSGFMGAKVLAPFLLERYGPDSMFSIIDEGAGLLRLDKNLYIAAAVNAEKGYVDVRISIHGHGGHSSVQPDHTTIGVASELIYMMENHPFDYNFSLDNPIYDVLQCAAEHSGFLPPHVREAILKAPVDEGKRKVLTEFAASHPDIRDLIRTTRAVDVINGGVKANALPGLTSFIVNHRVDIHSSVNETVENDLYWARVIAEKHGYGLTFHDEIIIPETKLGHISLASEKMLEPAPVSPTSGHVWEIFAGTVQNLFQNEILAEQKDADVYVTGGLFSGNTDTKYYWGLSKNIYRFVAGIFPFDQLRTIHSVNEHISASSHVSAVAFVYEYIVNVNEYGHD.

At 1–29 (MTETHHAPLPDVYPSSKQPTSSTYSKCKK) the chain is on the cytoplasmic side. Residue Lys17 forms a Glycyl lysine isopeptide (Lys-Gly) (interchain with G-Cter in ubiquitin) linkage. Residues 30–46 (FGLPLIGLLTLLLAYIS) traverse the membrane as a helical; Signal-anchor for type II membrane protein segment. Residues 47-581 (SFTKPVPNST…IVNVNEYGHD (535 aa)) are Extracellular-facing. Residues Asn54 and Asn76 are each glycosylated (N-linked (GlcNAc...) asparagine). Position 170 (His170) interacts with Zn(2+). The active site involves Asp172. A Zn(2+)-binding site is contributed by Asp207. The Proton acceptor role is filled by Glu241. Positions 242 and 270 each coordinate Zn(2+). Residues Asn335 and Asn428 are each glycosylated (N-linked (GlcNAc...) asparagine). His550 contacts Zn(2+).

This sequence belongs to the peptidase M20A family. Zn(2+) serves as cofactor.

It localises to the membrane. This chain is Putative carboxypeptidase YOL153C, found in Saccharomyces cerevisiae (strain ATCC 204508 / S288c) (Baker's yeast).